An 813-amino-acid chain; its full sequence is MVALLLFPMLLQLLSPTCAQTQKNITLGSTLAPQGPASSWLSPSGDFAFGFRPVEGNTSFYLIAVWFNKISDKTVVWYAKNTDQDPSIVEVPSDSFLQLTNDGALSLKDRSGQEGWNPQVTGVAYASMRDTGNFVLLGADGTTKWQTFDMPSDTILPTQVIPCNKTRNKSLRARLDIDDYSSGRFLLDVQTDGNLALYLVAVPSGSKYQQYWSTDTTGNGSELVFSETGKVYFALTDGTQINISSDAGIGSMADYFHRATLDPDGVFRQYVYPKKANAGILGGETWTALSMQPQNICHAIVSDVGSGVCGFNSYCTFDGTRNQIASCQCPPWYKFFDEQKKYKGCKQDFQPHSCDLEEATALAQFELRPIYGVDWPLSDYEKYEPIGQDDCGRLCVIECFCAMAVYNQSTSTCWKKKLPLSNGNMADYVQRTVLLKVPSSNSSQFMISTSSNKWKRNRKHWVLGSSLILGTSILVNFALISIFLFGTYCRITTKKNIPLSQASSKSQLPLKTFTYKELEKATAGFHEILGAGASGVVYKGQLEDELKTNIAVKTIHKLQPETEKEFMVEVETIGQTFHKNLVRLLGFCNERAERLLVYEFMTNGPLNRLLFDNSRPHWNTRVHIALGVARGFLYLHDECSKQIIHCDIKPQNILLDDNLVAKISDFGLAKLLLTNQTRTKTGIRGTRGYVAPEWFKNIGISTKVDVYSFGVILLELVCCRRNVELEVVDEEQTIVTYWANDCYRSGRIDLLVEGDDEAIYDIKKVERFVTVALWCLQEDPSMRPNMLKVTQMLDGAVAIPSPPDPCSFISSLP.

A signal peptide spans 1–19 (MVALLLFPMLLQLLSPTCA). Over 20–466 (QTQKNITLGS…NRKHWVLGSS (447 aa)) the chain is Extracellular. In terms of domain architecture, Bulb-type lectin spans 22 to 149 (QKNITLGSTL…DGTTKWQTFD (128 aa)). N-linked (GlcNAc...) asparagine glycosylation is found at asparagine 24, asparagine 57, asparagine 164, asparagine 168, asparagine 219, and asparagine 242. Residues 293–346 (PQNICHAIVSDVGSGVCGFNSYCTFDGTRNQIASCQCPPWYKFFDEQKKYKGCK) form the EGF-like; atypical domain. Cystine bridges form between cysteine 297-cysteine 315, cysteine 309-cysteine 327, cysteine 329-cysteine 345, cysteine 391-cysteine 413, and cysteine 395-cysteine 401. The 80-residue stretch at 354–433 (CDLEEATALA…NMADYVQRTV (80 aa)) folds into the PAN domain. 2 N-linked (GlcNAc...) asparagine glycosylation sites follow: asparagine 407 and asparagine 441. A helical membrane pass occupies residues 467 to 487 (LILGTSILVNFALISIFLFGT). Residues 488 to 813 (YCRITTKKNI…DPCSFISSLP (326 aa)) lie on the Cytoplasmic side of the membrane. Positions 523-797 (AGFHEILGAG…KVTQMLDGAV (275 aa)) constitute a Protein kinase domain. Residues 529–537 (LGAGASGVV) and lysine 553 contribute to the ATP site. Catalysis depends on aspartate 647, which acts as the Proton acceptor.

Belongs to the protein kinase superfamily. Ser/Thr protein kinase family. In terms of assembly, interacts (via kinase domain) with ADF4. As to expression, expressed in plumules, radicles and panicles.

The protein resides in the membrane. The enzyme catalyses L-seryl-[protein] + ATP = O-phospho-L-seryl-[protein] + ADP + H(+). It catalyses the reaction L-threonyl-[protein] + ATP = O-phospho-L-threonyl-[protein] + ADP + H(+). Functionally, involved in innate immunity. Required for the expression of defense-related genes PR1A, LOX2 and CHS1 upon biotic stresses. Required for basal resistance to the fungal blast (M.grisea), bacterial blight (O.oryzae pv. oryzae, Xoo) and the herbivorous insect brown planthopper (N.lugens, BPH). May be involved in several defense signaling pathways. Involved in the promotion of seed germination. Required for the expression of alpha-amylase genes during seed germination. Involved in resistance against the brown planthopper (BPH). Member of the BPH3 (BPH resistance locus 3) cluster which contains LECRK1, LECRK2 and LECRK3. This chain is G-type lectin S-receptor-like serine/threonine-protein kinase LECRK1, found in Oryza sativa subsp. indica (Rice).